The sequence spans 506 residues: Glutamyl-tRNA(Gln) amidotransferase subunit A, mitochondrial (506 aa).

Catalysis depends on charge relay system residues K62 and S141. The active-site Acyl-ester intermediate is the S165.

The protein belongs to the amidase family. GatA subfamily. As to quaternary structure, subunit of the heterotrimeric GatCAB amidotransferase (AdT) complex, composed of A, B and C subunits.

The protein localises to the mitochondrion. It catalyses the reaction L-glutamyl-tRNA(Gln) + L-glutamine + ATP + H2O = L-glutaminyl-tRNA(Gln) + L-glutamate + ADP + phosphate + H(+). Functionally, allows the formation of correctly charged Gln-tRNA(Gln) through the transamidation of misacylated Glu-tRNA(Gln) in the mitochondria. The reaction takes place in the presence of glutamine and ATP through an activated gamma-phospho-Glu-tRNA(Gln). The sequence is that of Glutamyl-tRNA(Gln) amidotransferase subunit A, mitochondrial from Emericella nidulans (strain FGSC A4 / ATCC 38163 / CBS 112.46 / NRRL 194 / M139) (Aspergillus nidulans).